Here is a 252-residue protein sequence, read N- to C-terminus: Imidazole glycerol phosphate synthase subunit HisF (252 aa).

Active-site residues include Asp-11 and Asp-130.

The protein belongs to the HisA/HisF family. Heterodimer of HisH and HisF.

It is found in the cytoplasm. The enzyme catalyses 5-[(5-phospho-1-deoxy-D-ribulos-1-ylimino)methylamino]-1-(5-phospho-beta-D-ribosyl)imidazole-4-carboxamide + L-glutamine = D-erythro-1-(imidazol-4-yl)glycerol 3-phosphate + 5-amino-1-(5-phospho-beta-D-ribosyl)imidazole-4-carboxamide + L-glutamate + H(+). Its pathway is amino-acid biosynthesis; L-histidine biosynthesis; L-histidine from 5-phospho-alpha-D-ribose 1-diphosphate: step 5/9. Functionally, IGPS catalyzes the conversion of PRFAR and glutamine to IGP, AICAR and glutamate. The HisF subunit catalyzes the cyclization activity that produces IGP and AICAR from PRFAR using the ammonia provided by the HisH subunit. In Azoarcus sp. (strain BH72), this protein is Imidazole glycerol phosphate synthase subunit HisF.